A 465-amino-acid polypeptide reads, in one-letter code: Antithrombin-III (465 aa).

The first 32 residues, 1–32 (MISNGIGTVTTGKRSMCLFPLLLIGLWGCVTC), serve as a signal peptide directing secretion. 2 disulfide bridges follow: Cys41-Cys161 and Cys54-Cys128. Phosphothreonine is present on Thr64. The residue at position 69 (Ser69) is a Phosphoserine. Trp82 lines the heparin pocket. The N-linked (GlcNAc...) asparagine glycan is linked to Asn129. Arg162 contributes to the heparin binding site. Asn168 is a glycosylation site (N-linked (GlcNAc...) asparagine). Heparin is bound at residue Arg178. Asn188 and Asn225 each carry an N-linked (GlcNAc...) asparagine glycan. The cysteines at positions 280 and 463 are disulfide-linked.

Belongs to the serpin family. In terms of assembly, forms protease inhibiting heterodimer with TMPRSS7. In terms of processing, phosphorylated by FAM20C in the extracellular medium. Plasma.

It is found in the secreted. It localises to the extracellular space. Functionally, most important serine protease inhibitor in plasma that regulates the blood coagulation cascade. AT-III inhibits thrombin, matriptase-3/TMPRSS7, as well as factors IXa, Xa and XIa. Its inhibitory activity is greatly enhanced in the presence of heparin. The protein is Antithrombin-III (SERPINC1) of Ovis aries (Sheep).